Reading from the N-terminus, the 76-residue chain is Putative snRNP Sm-like protein (76 aa).

The Sm domain maps to 4–76; that stretch reads RPLDVIHKSL…VLAISPTEEG (73 aa).

Belongs to the snRNP Sm proteins family.

In Pyrococcus furiosus (strain ATCC 43587 / DSM 3638 / JCM 8422 / Vc1), this protein is Putative snRNP Sm-like protein.